The chain runs to 527 residues: Triostin synthetase I (527 aa).

An ATP-binding site is contributed by 187-188 (GG). 230–231 (HQ) contributes to the substrate binding site. ATP is bound by residues 300–302 (SAP), Asp-406, Arg-421, and Lys-512. Lys-512 provides a ligand contact to substrate.

This sequence belongs to the ATP-dependent AMP-binding enzyme family. In terms of assembly, monomer.

Involved in triostin biosynthesis. Activates quinoxaline-2-carboxylic acid (QA) via catalysis of the ATP-pyrophosphate exchange reaction dependent on QA, and the formation of the corresponding adenylate. Also activates structural analogs of QA such as quinoline-2-carboxylic acid and thieno[3,2-b]pyridine-5-carboxylic acid, but not quinoline-3-carboxylic acid, quinoline-4-carboxylic acid, pyridine-2-carboxylic acid or 2-pyrazinecarboxylic acid. The chain is Triostin synthetase I (trsA) from Streptomyces triostinicus.